The primary structure comprises 396 residues: Capsular polysaccharide biosynthesis protein CapF (396 aa).

Helical transmembrane passes span Y7 to V27, A41 to V61, A74 to G94, I101 to Y121, L129 to Y149, H153 to I173, I198 to I218, L232 to I252, M279 to E299, I315 to T335, L351 to L371, and G372 to Y392.

The protein belongs to the polysaccharide synthase family.

Its subcellular location is the cell membrane. It participates in capsule biogenesis; capsule polysaccharide biosynthesis. Its function is as follows. Required for the biosynthesis of type 1 capsular polysaccharide. The chain is Capsular polysaccharide biosynthesis protein CapF (capF) from Staphylococcus aureus.